We begin with the raw amino-acid sequence, 311 residues long: MALPILFDCDPGHDDAIAIVLALASPELDVKAITSSAGNQTPDKTLRNVLRMLTLLNRTDISVAGGAVKPLMRDLIIADNVHGESGLDGPALPEPAFAPLDCTAVELMAKVLRESPEPVTIVSTGPQTNVALLLNSHPELHAKIARIVIMGGAMGLGNWTPAAEFNIYVDPEAAEIVFQSGIRVVMAGLDVTHKAQIHREDTERFRAIGNPVSTIVAELLDFFFEYHKDEKWGFIGAPLHDPCTIAWLLKPELFTTVERWVGVETQGKYTQGMTVVDYYFLSGNKPNATVMVDVDRQGFVDLLAERLQYYA.

Residue His240 is part of the active site.

This sequence belongs to the IUNH family. RihA subfamily.

In terms of biological role, hydrolyzes cytidine or uridine to ribose and cytosine or uracil, respectively. This chain is Pyrimidine-specific ribonucleoside hydrolase RihA, found in Salmonella newport (strain SL254).